A 271-amino-acid polypeptide reads, in one-letter code: Pyrroline-5-carboxylate reductase (271 aa).

It belongs to the pyrroline-5-carboxylate reductase family.

It localises to the cytoplasm. The catalysed reaction is L-proline + NADP(+) = (S)-1-pyrroline-5-carboxylate + NADPH + 2 H(+). It carries out the reaction L-proline + NAD(+) = (S)-1-pyrroline-5-carboxylate + NADH + 2 H(+). It functions in the pathway amino-acid biosynthesis; L-proline biosynthesis; L-proline from L-glutamate 5-semialdehyde: step 1/1. In terms of biological role, catalyzes the reduction of 1-pyrroline-5-carboxylate (PCA) to L-proline. The protein is Pyrroline-5-carboxylate reductase of Haemophilus influenzae (strain ATCC 51907 / DSM 11121 / KW20 / Rd).